The primary structure comprises 171 residues: S-ribosylhomocysteine lyase (171 aa).

Residues His54, His58, and Cys128 each contribute to the Fe cation site.

It belongs to the LuxS family. Homodimer. Fe cation is required as a cofactor.

It catalyses the reaction S-(5-deoxy-D-ribos-5-yl)-L-homocysteine = (S)-4,5-dihydroxypentane-2,3-dione + L-homocysteine. Involved in the synthesis of autoinducer 2 (AI-2) which is secreted by bacteria and is used to communicate both the cell density and the metabolic potential of the environment. The regulation of gene expression in response to changes in cell density is called quorum sensing. Catalyzes the transformation of S-ribosylhomocysteine (RHC) to homocysteine (HC) and 4,5-dihydroxy-2,3-pentadione (DPD). This is S-ribosylhomocysteine lyase from Yersinia pseudotuberculosis serotype O:1b (strain IP 31758).